A 308-amino-acid polypeptide reads, in one-letter code: Mitochondrial brown fat uncoupling protein 1 (308 aa).

The Mitochondrial intermembrane portion of the chain corresponds to 1-10 (MVASAEADVP). The chain crosses the membrane as a helical span at residues 11–33 (PPTMLVKIASAGLSACLADIITF). Solcar repeat units lie at residues 11–103 (PPTM…VQEY), 112–202 (ATLG…LKEA), and 211–296 (DDIP…LKKE). The Mitochondrial matrix portion of the chain corresponds to 34 to 74 (PLDTAKVRLQVQGERPNAPGVKYKGVLGTIATVAKTEGPLK). Lysine 57 is a fatty acid 16:0 binding site. The helical transmembrane segment at 75 to 97 (LYGGLPAGIQRQISFASLRIGLY) threads the bilayer. At 98 to 117 (DTVQEYFNAHRKTPATLGNK) the chain is on the mitochondrial intermembrane side. Residues 118-134 (ISAGLMTGCVTVFIGQP) traverse the membrane as a helical segment. Residues 135-179 (TEVAKVRMQAQSSLHWLKPRYSGTYNAYYVIVKTEGFLGLWKGTS) are Mitochondrial matrix-facing. A helical transmembrane segment spans residues 180-196 (LNLTRNVIINCTELVVY). Residues 197–213 (DVLKEALVKNNVLADDI) lie on the Mitochondrial intermembrane side of the membrane. The helical transmembrane segment at 214–233 (PCHLLAALTAGFCTTALASP) threads the bilayer. Residues 234–267 (VDVVKTRFINSPPGYYPHVHNCALNMLQKEGLRA) lie on the Mitochondrial matrix side of the membrane. Cysteine 255 bears the Cysteine sulfenic acid (-SOH) mark. The chain crosses the membrane as a helical span at residues 268–290 (FFKGFVPSFLRLGSWTVIMHVTF). Residue lysine 270 participates in fatty acid 16:0 binding. Residues 291–308 (EQLKKELMKSRQTVDCAT) are Mitochondrial intermembrane-facing.

This sequence belongs to the mitochondrial carrier (TC 2.A.29) family. As to quaternary structure, most probably functions as a monomer. Binds one purine nucleotide per monomer. However, has also been suggested to function as a homodimer or a homotetramer. Tightly associates with cardiolipin in the mitochondrion inner membrane; may stabilize and regulate its activity. In terms of processing, may undergo sulfenylation upon cold exposure. May increase the sensitivity of UCP1 thermogenic function to the activation by noradrenaline probably through structural effects. May undergo ubiquitin-mediated proteasomal degradation. In terms of tissue distribution, brown adipose tissue.

Its subcellular location is the mitochondrion inner membrane. The enzyme catalyses H(+)(in) = H(+)(out). Has no constitutive proton transporter activity and has to be activated by long-chain fatty acids/LCFAs. Inhibited by purine nucleotides. Both purine nucleotides and LCFAs bind the cytosolic side of the transporter and directly compete to activate or inhibit it. Activated by noradrenaline and reactive oxygen species. Despite lacking canonical translational encoding for selenocysteine, a small pool of the protein has been observed to selectively incorporate selenocysteine at 'Cys-255'. Selenocysteine-modified protein is highly sensitive to redox modification and may constitute a pool of protein highly sensitive to activation by elevated levels of reactive oxygen species (ROS). Mitochondrial protein responsible for thermogenic respiration, a specialized capacity of brown adipose tissue and beige fat that participates in non-shivering adaptive thermogenesis to temperature and diet variations and more generally to the regulation of energy balance. Functions as a long-chain fatty acid/LCFA and proton symporter, simultaneously transporting one LCFA and one proton through the inner mitochondrial membrane. However, LCFAs remaining associated with the transporter via their hydrophobic tails, it results in an apparent transport of protons activated by LCFAs. Thereby, dissipates the mitochondrial proton gradient and converts the energy of substrate oxydation into heat instead of ATP. Regulates the production of reactive oxygen species/ROS by mitochondria. In Suncus murinus (Asian house shrew), this protein is Mitochondrial brown fat uncoupling protein 1.